The chain runs to 600 residues: Alpha pinene synthase, chloroplastic (600 aa).

The segment at 1–27 (MSSISMHAGPLNISAANNHHPSWDRRV) is disordered. The transit peptide at 1 to 31 (MSSISMHAGPLNISAANNHHPSWDRRVSKPR) directs the protein to the chloroplast. Mg(2+) contacts are provided by D354, D358, D498, and E506. The DDXXD motif signature appears at 354–358 (DDVYD).

It belongs to the terpene synthase family. Tpsa subfamily. The cofactor is Mg(2+). Mn(2+) is required as a cofactor. Expressed at low levels in leaves.

It is found in the plastid. The protein resides in the chloroplast. It catalyses the reaction (2E)-geranyl diphosphate = alpha-pinene + diphosphate. It participates in secondary metabolite biosynthesis; terpenoid biosynthesis. Functionally, monoterpene synthase involved in the biosynthesis of volatile compounds widely used in aromatherapy and folk medicine, and present in culinary herbs. Mediates the conversion of (2E)-geranyl diphosphate (GPP) into alpha-pinene and, as minor compounds, into alpha-phellandrene, limonene and alpha-terpinolene. This is Alpha pinene synthase, chloroplastic from Lavandula viridis (Green lavender).